The primary structure comprises 342 residues: MLTNPSQVIIRNQETLSQHKVLVLNHEADLLPKALLDVASSVDALALDYHHYLHLAPQANNKLRCYFGHQLPHQNKYNTVIVYFPKAKPLAPYLFNLAAQHLVPNGQLLVVGENKGGIKSLVKLLPNYFAAGVKLDNARHSLLFGSSLIDTAPEITLSDWASQYQLSTPQGNITICNLVGVFSEKHLDQGTELLLSHLPTLSGRVLDFGCGAGVIAATLLKAQPTLSLECIDINAMALASCELTLAANGMMAKVYPSDGLAQTSGKFDGIISNPPFHDGLASTTNIAQRFVADSAKQLQSKGIWQIVANRHLPYSDTIAAEFGQLTVPAENNKYKLYYFQQS.

The protein belongs to the methyltransferase superfamily. RsmC family. As to quaternary structure, monomer.

The protein resides in the cytoplasm. The catalysed reaction is guanosine(1207) in 16S rRNA + S-adenosyl-L-methionine = N(2)-methylguanosine(1207) in 16S rRNA + S-adenosyl-L-homocysteine + H(+). Functionally, specifically methylates the guanine in position 1207 of 16S rRNA in the 30S particle. In Shewanella oneidensis (strain ATCC 700550 / JCM 31522 / CIP 106686 / LMG 19005 / NCIMB 14063 / MR-1), this protein is Ribosomal RNA small subunit methyltransferase C.